The chain runs to 941 residues: Pre-mRNA-processing factor 6 (941 aa).

Positions 1–79 (MNKKKKPFLG…DEDLNDTNYD (79 aa)) are disordered. The segment covering 39–65 (DANDPVDDRHAPPGKRTVGDQMKKNQA) has biased composition (basic and acidic residues). Residues 66–78 (ADDDDEDLNDTNY) are compositionally biased toward acidic residues. S143 is subject to Phosphoserine. 3 positions are modified to phosphothreonine: T180, T266, and T275. S279 is modified (phosphoserine). HAT repeat units lie at residues 384 to 416 (TDIR…LEEP), 418 to 444 (DARI…ARLE), 445 to 476 (TYEN…LEEA), 554 to 586 (NALE…FEKN), 588 to 620 (GTRE…SKWL), 622 to 654 (GDVP…LESE), 689 to 721 (DNIR…IEEQ), 723 to 755 (EMME…LEEK), and 855 to 887 (RKIT…FELQ).

As to quaternary structure, identified in the spliceosome B complex. Identified in the spliceosome C complex. Associates with the U5 snRNP particle. Component of the U4/U6-U5 tri-snRNP complex composed of the U4, U6 and U5 snRNAs and at least PRPF3, PRPF4, PRPF6, PRPF8, PRPF31, SNRNP200, TXNL4A, SNRNP40, DDX23, CD2BP2, PPIH, SNU13, EFTUD2, SART1 and USP39, LSm proteins LSm2-8 and Sm proteins. Interacts with ARAF. Interacts with AR and NR3C1, but not ESR1, independently of the presence of hormones. Interacts with USH1G. In terms of processing, phosphorylated by PRP4K during spliceosome assembly. In terms of tissue distribution, widely expressed.

It localises to the nucleus. It is found in the nucleoplasm. The protein resides in the nucleus speckle. Involved in pre-mRNA splicing as component of the U4/U6-U5 tri-snRNP complex, one of the building blocks of the spliceosome. Enhances dihydrotestosterone-induced transactivation activity of AR, as well as dexamethasone-induced transactivation activity of NR3C1, but does not affect estrogen-induced transactivation. This Homo sapiens (Human) protein is Pre-mRNA-processing factor 6.